Reading from the N-terminus, the 148-residue chain is Deoxyuridine 5'-triphosphate nucleotidohydrolase (148 aa).

Substrate contacts are provided by residues Arg67–Gly69, Asn80, Leu84–Asp86, and Met94.

It belongs to the dUTPase family. It depends on Mg(2+) as a cofactor.

It catalyses the reaction dUTP + H2O = dUMP + diphosphate + H(+). It functions in the pathway pyrimidine metabolism; dUMP biosynthesis; dUMP from dCTP (dUTP route): step 2/2. This enzyme is involved in nucleotide metabolism: it produces dUMP, the immediate precursor of thymidine nucleotides and it decreases the intracellular concentration of dUTP so that uracil cannot be incorporated into DNA. The polypeptide is Deoxyuridine 5'-triphosphate nucleotidohydrolase (Burkholderia cenocepacia (strain ATCC BAA-245 / DSM 16553 / LMG 16656 / NCTC 13227 / J2315 / CF5610) (Burkholderia cepacia (strain J2315))).